A 458-amino-acid polypeptide reads, in one-letter code: Bifunctional protein GlmU (458 aa).

The tract at residues 1–230 (MLQVDVVILA…DWEVSGVNDK (230 aa)) is pyrophosphorylase. Residues 9 to 12 (LAAG), K23, Q75, and 80 to 81 (GT) each bind UDP-N-acetyl-alpha-D-glucosamine. D104 is a Mg(2+) binding site. Residues G139, E155, N170, and N228 each coordinate UDP-N-acetyl-alpha-D-glucosamine. Position 228 (N228) interacts with Mg(2+). Residues 231–251 (IQLSILERAHQQDTANRLMEQ) form a linker region. The tract at residues 252-458 (GVMFADPARF…NWKRPRKDRN (207 aa)) is N-acetyltransferase. UDP-N-acetyl-alpha-D-glucosamine-binding residues include R334 and K352. Residue H364 is the Proton acceptor of the active site. The UDP-N-acetyl-alpha-D-glucosamine site is built by Y367 and N378. Residues A381, 387–388 (NY), S406, A424, and R441 each bind acetyl-CoA.

It in the N-terminal section; belongs to the N-acetylglucosamine-1-phosphate uridyltransferase family. This sequence in the C-terminal section; belongs to the transferase hexapeptide repeat family. Homotrimer. Mg(2+) is required as a cofactor.

It localises to the cytoplasm. The catalysed reaction is alpha-D-glucosamine 1-phosphate + acetyl-CoA = N-acetyl-alpha-D-glucosamine 1-phosphate + CoA + H(+). It carries out the reaction N-acetyl-alpha-D-glucosamine 1-phosphate + UTP + H(+) = UDP-N-acetyl-alpha-D-glucosamine + diphosphate. The protein operates within nucleotide-sugar biosynthesis; UDP-N-acetyl-alpha-D-glucosamine biosynthesis; N-acetyl-alpha-D-glucosamine 1-phosphate from alpha-D-glucosamine 6-phosphate (route II): step 2/2. Its pathway is nucleotide-sugar biosynthesis; UDP-N-acetyl-alpha-D-glucosamine biosynthesis; UDP-N-acetyl-alpha-D-glucosamine from N-acetyl-alpha-D-glucosamine 1-phosphate: step 1/1. It functions in the pathway bacterial outer membrane biogenesis; LPS lipid A biosynthesis. In terms of biological role, catalyzes the last two sequential reactions in the de novo biosynthetic pathway for UDP-N-acetylglucosamine (UDP-GlcNAc). The C-terminal domain catalyzes the transfer of acetyl group from acetyl coenzyme A to glucosamine-1-phosphate (GlcN-1-P) to produce N-acetylglucosamine-1-phosphate (GlcNAc-1-P), which is converted into UDP-GlcNAc by the transfer of uridine 5-monophosphate (from uridine 5-triphosphate), a reaction catalyzed by the N-terminal domain. The protein is Bifunctional protein GlmU of Nitrosomonas europaea (strain ATCC 19718 / CIP 103999 / KCTC 2705 / NBRC 14298).